A 1214-amino-acid polypeptide reads, in one-letter code: MHSKELQTISAAVARKAVPNTMVIRLKRDEEDGEMTLEERQAQCKAIEYSNSVFGMIADVANDIGSIPVIGEVVGIVTAPIAIVSHITSAGLDIASTALDCDDIPFDEIKEILEERFNEIDRKLDKNTAALEEVSKLVSKTFVTVEKTRNEMNENFKLVLETIESKEIKSIVFKINDFKKFFEKERQRIKGLPKDRYVAKLLEQKGILGSLKEVREPSGNSLSSALNELLDKNNNYAIPKVVDDNKAFQALYALFYGTQTYAAVMFFLLEQHSYLADYYYQKGDDVNFNAEFNNVAIIFDDFKSSLTGGDDGLIDNVIEVLNTVKALPFIKNADSKLYRELVTRTKALETLKNQIKTTDLPLIDDIPETLSQVNFPNDENQLPTPIGNWVDGVEVRYAVQYESKGMYSKFSEWSEPFTVQGNACPTIKVRVDPKKRNRLIFRKFNSGKPQFAGTMTHSQTNFKDIHRDLYDAALNINKLKAVDEATTLIEKGADIEAKFDNDRSAMHAVAYRGNNKIALRFLLKNQSIDIELKDKNGFTPLHIAAEAGQAGFVKLLINHGADVNAKTSKTNLTPLHLATRSGFSKTVRNLLESPNIKVNEKEDDGFTPLHTAVMSTYMVVDALLNHPDIDKNAQSTSGLTPFHLAIINESQEVAESLVESNADLNIQDVNHMAPIHFAASMGSIKMLRYLISIKDKVSINSVTENNNWTPLHFAIYFKKEDAAKELLKQDDINLTIVADGNLTVLHLAVSTGQINIIKELLKRGSNIEEKTGEGYTSLHIAAMRKEPEIAVVLIENGADIEARSADNLTPLHSAAKIGRKSTVLYLLEKGADIGAKTADGSTALHLAVSGRKMKTVETLLNKGANLKEYDNNKYLPIHKAIINDDLDMVRLFLEKDPSLKDDETEEGRTSIMLIVQKLLLELYNYFINNYAETLDEEALFNRLDEQGKLELAYIFHNKEGDAKEAVKPTILVTIKLMEYCLKKLREESGAPEGSFDSPSSKQCISTFSEDEMFRRTLPEIVKETNSRYLPLKGFSRSLNKFLPSLKFAESKNSYRSENFVSNIDSNGALLLLDVFIRKFTNEKYNLTGKEAVPYLEAKASSLRIASKFEELLTEVKGIPAGELINMAEVSSNIHKAIASGKPVSKVLCSYLDTFSELNSQQMEELVNTYLSTKPSVITSASADYQKLPNLLTATCLEPERMAQLIDVHQKMFLR.

A helix H2 is the probable transmembrane region of the tetrameric pore inserted in the target cell membrane region spans residues 64–89 (IGSIPVIGEVVGIVTAPIAIVSHITS). Residues 250-269 (ALYALFYGTQTYAAVMFFLL) form a helix H8 is the probable transmembrane region of the tetrameric pore inserted in the target cell membrane region. ANK repeat units follow at residues 464 to 497 (DIHR…DIEA), 501 to 532 (NDRS…DIEL), 536 to 565 (NGFT…DVNA), 570 to 600 (TNLT…KVNE), 604 to 633 (DGFT…DKNA), 637 to 666 (SGLT…DLNI), 670 to 699 (NHMA…KVSI), 706 to 734 (NNWT…DINL), 740 to 769 (GNLT…NIEE), 773 to 802 (EGYT…DIEA), 806 to 835 (DNLT…DIGA), 839 to 868 (DGST…NLKE), 872 to 901 (NKYL…SLKD), 906 to 936 (EGRT…TLDE), and 966 to 994 (VKPT…PEGS). Residues 1020 to 1214 (IVKETNSRYL…IDVHQKMFLR (195 aa)) constitute a propeptide, C-terminal domain cleavage is required for toxin activation.

This sequence belongs to the cationic peptide 01 (latrotoxin) family. 04 (delta-latroinsectotoxin) subfamily. In terms of assembly, homotetramer in membrane. As to expression, expressed by the venom gland.

The protein localises to the secreted. Its subcellular location is the target cell membrane. Functionally, insecticidal presynaptic neurotoxin that induces massive neurotransmitter release at insect (but not vertebrate) neuromuscular junctions. Native toxin forms cation-permeable pores (with high permeability to calcium) in lipid membranes locust muscle membrane and artificial lipid bilayers. May bind to insect neurexin-1 homolog, insect adhesion G protein-coupled receptor L1 homolog, and insect receptor-type tyrosine-protein phosphatase S homolog, and induces neurotransmitter exocytosis both by forming tetrameric pores in membranes and signaling via G protein-coupled receptor. Oligomerization is a process independent of divalent cations. The sequence is that of Delta-latroinsectotoxin-Lt1a from Latrodectus tredecimguttatus (Mediterranean black widow spider).